A 1320-amino-acid polypeptide reads, in one-letter code: Phosphoribosylformylglycinamidine synthase (1320 aa).

ATP contacts are provided by residues 310-321 and Ala686; that span reads GAATGSGGEIRD. Asp687, Glu726, Asn730, and Asp894 together coordinate Mg(2+). Ser896 is an ATP binding site. In terms of domain architecture, Glutamine amidotransferase type-1 spans 1067-1320; it reads VAILREQGVN…MFRNARAFIG (254 aa). Cys1160 (nucleophile) is an active-site residue. Residues His1285 and Glu1287 contribute to the active site.

The protein in the N-terminal section; belongs to the FGAMS family. In terms of assembly, monomer.

Its subcellular location is the cytoplasm. The enzyme catalyses N(2)-formyl-N(1)-(5-phospho-beta-D-ribosyl)glycinamide + L-glutamine + ATP + H2O = 2-formamido-N(1)-(5-O-phospho-beta-D-ribosyl)acetamidine + L-glutamate + ADP + phosphate + H(+). It participates in purine metabolism; IMP biosynthesis via de novo pathway; 5-amino-1-(5-phospho-D-ribosyl)imidazole from N(2)-formyl-N(1)-(5-phospho-D-ribosyl)glycinamide: step 1/2. Functionally, phosphoribosylformylglycinamidine synthase involved in the purines biosynthetic pathway. Catalyzes the ATP-dependent conversion of formylglycinamide ribonucleotide (FGAR) and glutamine to yield formylglycinamidine ribonucleotide (FGAM) and glutamate. The protein is Phosphoribosylformylglycinamidine synthase of Colwellia psychrerythraea (strain 34H / ATCC BAA-681) (Vibrio psychroerythus).